We begin with the raw amino-acid sequence, 55 residues long: Large ribosomal subunit protein bL33 (55 aa).

It belongs to the bacterial ribosomal protein bL33 family.

The sequence is that of Large ribosomal subunit protein bL33 from Rhizobium etli (strain CIAT 652).